The sequence spans 69 residues: DNA gyrase inhibitor YacG (69 aa).

Residues cysteine 14, cysteine 17, cysteine 33, and cysteine 37 each contribute to the Zn(2+) site. A disordered region spans residues 46-69 (ADEEKSIPGAPDMSDSDGWSEDQY). Residues 59-69 (SDSDGWSEDQY) are compositionally biased toward acidic residues.

This sequence belongs to the DNA gyrase inhibitor YacG family. Interacts with GyrB. It depends on Zn(2+) as a cofactor.

Functionally, inhibits all the catalytic activities of DNA gyrase by preventing its interaction with DNA. Acts by binding directly to the C-terminal domain of GyrB, which probably disrupts DNA binding by the gyrase. In Aliivibrio fischeri (strain MJ11) (Vibrio fischeri), this protein is DNA gyrase inhibitor YacG.